Consider the following 272-residue polypeptide: Glutamate racemase (272 aa).

Substrate is bound by residues 9 to 10 and 41 to 42; these read DS and YG. The active-site Proton donor/acceptor is Cys73. Substrate is bound at residue 74 to 75; the sequence is NT. Cys183 (proton donor/acceptor) is an active-site residue. Position 184-185 (184-185) interacts with substrate; that stretch reads TH.

It belongs to the aspartate/glutamate racemases family.

It carries out the reaction L-glutamate = D-glutamate. It participates in cell wall biogenesis; peptidoglycan biosynthesis. Its function is as follows. Provides the (R)-glutamate required for cell wall biosynthesis. The sequence is that of Glutamate racemase from Shewanella sp. (strain MR-7).